The primary structure comprises 239 residues: Probable intron-encoded endonuclease I-ZbiI (239 aa).

This sequence belongs to the LAGLIDADG endonuclease family.

Its subcellular location is the mitochondrion. Endonuclease involved in mitochondrial 21S rRNA gene intron homing. The polypeptide is Probable intron-encoded endonuclease I-ZbiI (Zygosaccharomyces bisporus).